Here is a 365-residue protein sequence, read N- to C-terminus: tRNA(Met) cytidine acetate ligase (365 aa).

Residues 7–20, glycine 96, asparagine 152, and arginine 175 each bind ATP; that span reads IAEF…HKYL.

It belongs to the TmcAL family.

It localises to the cytoplasm. It carries out the reaction cytidine(34) in elongator tRNA(Met) + acetate + ATP = N(4)-acetylcytidine(34) in elongator tRNA(Met) + AMP + diphosphate. Functionally, catalyzes the formation of N(4)-acetylcytidine (ac(4)C) at the wobble position of elongator tRNA(Met), using acetate and ATP as substrates. First activates an acetate ion to form acetyladenylate (Ac-AMP) and then transfers the acetyl group to tRNA to form ac(4)C34. The polypeptide is tRNA(Met) cytidine acetate ligase (Streptococcus pneumoniae (strain Hungary19A-6)).